We begin with the raw amino-acid sequence, 53 residues long: Large ribosomal subunit protein bL33A (53 aa).

Belongs to the bacterial ribosomal protein bL33 family.

In Mycoplasmoides gallisepticum (strain R(low / passage 15 / clone 2)) (Mycoplasma gallisepticum), this protein is Large ribosomal subunit protein bL33A.